The primary structure comprises 505 residues: Activin receptor type-1B (505 aa).

An N-terminal signal peptide occupies residues 1 to 23 (MAESAGASSFFPLVVLLLAGSGG). Topologically, residues 24-126 (SGPRGIQALL…AHPSMWGPVE (103 aa)) are extracellular. Residue asparagine 43 is glycosylated (N-linked (GlcNAc...) asparagine). Residues 127–149 (LVGIIAGPVFLLFLIIIIVFLVI) form a helical membrane-spanning segment. The Cytoplasmic portion of the chain corresponds to 150-505 (NYHQRVYHNR…QLSVQEDVKI (356 aa)). Residues 177-206 (KTLQDLVYDLSTSGSGSGLPLFVQRTVART) form the GS domain. One can recognise a Protein kinase domain in the interval 207–497 (IVLQEIIGKG…LRIKKTLSQL (291 aa)). Residues 213–221 (IGKGRFGEV) and lysine 234 each bind ATP. Aspartate 335 functions as the Proton acceptor in the catalytic mechanism. A Phosphotyrosine modification is found at tyrosine 380.

Belongs to the protein kinase superfamily. TKL Ser/Thr protein kinase family. TGFB receptor subfamily. In terms of assembly, forms an activin receptor complex with activin receptor type-2 (ACVR2A or ACVR2B). Part of a complex consisting of MAGI2/ARIP1, ACVR2A, ACVR1B and SMAD3. Interacts with SMAD2 and SMAD3. Interacts with SMAD7. Interacts with FKBP1A. Interacts with IGSF1. Interacts with CRIPTO. Interacts with TDP2. Interacts with TSC22D1/TSC-22. Autophosphorylated. Phosphorylated by activin receptor type-2 (ACVR2A or ACVR2B) in response to activin-binding at serine and threonine residues in the GS domain. Phosphorylation of ACVR1B by activin receptor type-2 regulates association with SMAD7. Post-translationally, ubiquitinated. Level of ubiquitination is regulated by the SMAD7-SMURF1 complex. In terms of processing, ubiquitinated.

It localises to the cell membrane. The catalysed reaction is L-threonyl-[receptor-protein] + ATP = O-phospho-L-threonyl-[receptor-protein] + ADP + H(+). The enzyme catalyses L-seryl-[receptor-protein] + ATP = O-phospho-L-seryl-[receptor-protein] + ADP + H(+). Activin receptor type-2 (ACVR2A or ACVR2B) activates the type-1 receptor through phosphorylation of its regulatory GS domain. In terms of biological role, transmembrane serine/threonine kinase activin type-1 receptor forming an activin receptor complex with activin receptor type-2 (ACVR2A or ACVR2B). Transduces the activin signal from the cell surface to the cytoplasm and is thus regulating a many physiological and pathological processes including neuronal differentiation and neuronal survival, hair follicle development and cycling, FSH production by the pituitary gland, wound healing, extracellular matrix production, immunosuppression and carcinogenesis. Activin is also thought to have a paracrine or autocrine role in follicular development in the ovary. Within the receptor complex, type-2 receptors (ACVR2A and/or ACVR2B) act as a primary activin receptors whereas the type-1 receptors like ACVR1B act as downstream transducers of activin signals. Activin binds to type-2 receptor at the plasma membrane and activates its serine-threonine kinase. The activated receptor type-2 then phosphorylates and activates the type-1 receptor such as ACVR1B. Once activated, the type-1 receptor binds and phosphorylates the SMAD proteins SMAD2 and SMAD3, on serine residues of the C-terminal tail. Soon after their association with the activin receptor and subsequent phosphorylation, SMAD2 and SMAD3 are released into the cytoplasm where they interact with the common partner SMAD4. This SMAD complex translocates into the nucleus where it mediates activin-induced transcription. Inhibitory SMAD7, which is recruited to ACVR1B through FKBP1A, can prevent the association of SMAD2 and SMAD3 with the activin receptor complex, thereby blocking the activin signal. Activin signal transduction is also antagonized by the binding to the receptor of inhibin-B via the IGSF1 inhibin coreceptor. ACVR1B also phosphorylates TDP2. The protein is Activin receptor type-1B (Acvr1b) of Mus musculus (Mouse).